Consider the following 573-residue polypeptide: Sulfite reductase [NADPH] hemoprotein beta-component (573 aa).

Residues 1–20 (MAKVELKAPDGPPSDVERIK) are disordered. [4Fe-4S] cluster is bound by residues Cys-438, Cys-444, Cys-483, and Cys-487. Cys-487 provides a ligand contact to siroheme.

Belongs to the nitrite and sulfite reductase 4Fe-4S domain family. Alpha(8)-beta(8). The alpha component is a flavoprotein, the beta component is a hemoprotein. Siroheme is required as a cofactor. The cofactor is [4Fe-4S] cluster.

It carries out the reaction hydrogen sulfide + 3 NADP(+) + 3 H2O = sulfite + 3 NADPH + 4 H(+). It participates in sulfur metabolism; hydrogen sulfide biosynthesis; hydrogen sulfide from sulfite (NADPH route): step 1/1. Its function is as follows. Component of the sulfite reductase complex that catalyzes the 6-electron reduction of sulfite to sulfide. This is one of several activities required for the biosynthesis of L-cysteine from sulfate. The chain is Sulfite reductase [NADPH] hemoprotein beta-component from Geobacillus kaustophilus (strain HTA426).